A 399-amino-acid chain; its full sequence is MAATAAAVVAEEDTELRDLLVQTLENSGVLNRIKAELRAAVFLALEEQEKVENKTPLVNESLKKFLNTKDGRLVASLVAEFLQFFNLDFTLAVFQPETSTLQGLEGRENLARDLGIIEAEGTVGGPLLLEVIRRCQQKEKGPTTGEGALDLSDVHSPPKSPEGKTSAQTTPSKIPRYKGQGKKKTSGQKAGDKKANDEANQSDTSVSLSEPKSKSSLHLLSHETKIGSFLSNRTLDGKDKAGLCPDEDDMEGDSFFDDPIPKPEKTYGLRKEPRKQAGSLASLSDAPPLKSGLSSLAGAPSLKDSESKRGNTVLKDLKLISDKIGSLGLGTGEDDDYVDDFNSTSHRSEKSEISIGEEIEEDLSVEIDDINTSDKLDDLTQDLTVSQLSDVADYLEDVA.

In terms of domain architecture, LisH spans 70-102 (DGRLVASLVAEFLQFFNLDFTLAVFQPETSTLQ). Disordered regions lie at residues 139-218 (EKGP…SSLH) and 232-308 (NRTL…SESK). Phosphothreonine is present on T143. 3 positions are modified to phosphoserine: S152, S156, and S160. Residues 163–172 (GKTSAQTTPS) are compositionally biased toward polar residues. T170 carries the post-translational modification Phosphothreonine. Positions 175–186 (PRYKGQGKKKTS) are enriched in basic residues. S202 carries the phosphoserine modification. Low complexity predominate over residues 205–218 (SVSLSEPKSKSSLH). T234 is modified (phosphothreonine). The segment covering 245–256 (PDEDDMEGDSFF) has biased composition (acidic residues). Basic and acidic residues predominate over residues 259-275 (PIPKPEKTYGLRKEPRK). The span at 286 to 302 (APPLKSGLSSLAGAPSL) shows a compositional bias: low complexity. 2 positions are modified to phosphoserine: S301 and S326. Residues 331 to 353 (TGEDDDYVDDFNSTSHRSEKSEI) form a disordered region. Y337 carries the phosphotyrosine modification.

This sequence belongs to the CEP43 family. In terms of assembly, homodimer. Part of a ternary complex that contains CEP350, CEP43 and MAPRE1. Interacts directly with CEP350 and MAPRE1. Interacts with CEP19. Interacts (via N-terminus) with CEP350 (via C-terminus). In terms of tissue distribution, ubiquitous. Highly expressed in heart, liver, muscle, kidney, intestine, colon, adrenal gland, prostate, testis, and pancreas.

The protein resides in the cytoplasm. It is found in the cytoskeleton. The protein localises to the microtubule organizing center. Its subcellular location is the centrosome. It localises to the centriole. The protein resides in the cilium basal body. Functionally, required for anchoring microtubules to the centrosomes. Required for ciliation. The sequence is that of Centrosomal protein 43 from Homo sapiens (Human).